Reading from the N-terminus, the 120-residue chain is NAD(P)H-quinone oxidoreductase subunit 3, chloroplastic (120 aa).

3 helical membrane-spanning segments follow: residues I9–G29, M64–M84, and V88–L108.

This sequence belongs to the complex I subunit 3 family. NDH is composed of at least 16 different subunits, 5 of which are encoded in the nucleus.

The protein localises to the plastid. Its subcellular location is the chloroplast thylakoid membrane. It carries out the reaction a plastoquinone + NADH + (n+1) H(+)(in) = a plastoquinol + NAD(+) + n H(+)(out). It catalyses the reaction a plastoquinone + NADPH + (n+1) H(+)(in) = a plastoquinol + NADP(+) + n H(+)(out). Functionally, NDH shuttles electrons from NAD(P)H:plastoquinone, via FMN and iron-sulfur (Fe-S) centers, to quinones in the photosynthetic chain and possibly in a chloroplast respiratory chain. The immediate electron acceptor for the enzyme in this species is believed to be plastoquinone. Couples the redox reaction to proton translocation, and thus conserves the redox energy in a proton gradient. This is NAD(P)H-quinone oxidoreductase subunit 3, chloroplastic from Lolium perenne (Perennial ryegrass).